We begin with the raw amino-acid sequence, 204 residues long: CASP-like protein 1B2 (204 aa).

Residues 1–28 (MASKGEEKPELVGSKQGIVSVTKAKHDQ) are Cytoplasmic-facing. A helical membrane pass occupies residues 29-49 (IVLVLRVVAFLATASATIVMG). The Extracellular segment spans residues 50–80 (LNQETKTLLVGTIGTTPIRATLKAKFQHTPA). A helical membrane pass occupies residues 81–101 (FVFFVVANGLASVYNLVMLGV). Residues 102–114 (DVFGRKLDCKGLR) are Cytoplasmic-facing. Residues 115–135 (LVIISILDMVIVAVVAAGASS) traverse the membrane as a helical segment. Residues 136–168 (AAFMAELGKNGNSHAKWNKICDKFESFCHQGGG) lie on the Extracellular side of the membrane. A helical transmembrane segment spans residues 169-189 (ALIPSFIALLLLFLISAISII). At 190 to 204 (TLHNQKLTSPHATTP) the chain is on the cytoplasmic side.

The protein belongs to the Casparian strip membrane proteins (CASP) family. In terms of assembly, homodimer and heterodimers.

The protein resides in the cell membrane. The polypeptide is CASP-like protein 1B2 (Vitis vinifera (Grape)).